The sequence spans 1875 residues: Soluble starch synthase 3a, chloroplastic/amyloplastic (1875 aa).

The N-terminal 49 residues, 1–49 (MEMALRPQSLLCPRSRLKVVIRPASSASGGGLAQYFLMTRRYTGSRIVR), are a transit peptide targeting the chloroplast. Residues 1007 to 1065 (KRELERVATEEAERRRHAEEQQRMGEQRAAEQAAREQAKKEIELKKNKLQNLLSSARTH) adopt a coiled-coil conformation. Positions 1014 to 1043 (ATEEAERRRHAEEQQRMGEQRAAEQAAREQ) are disordered.

This sequence belongs to the glycosyltransferase 1 family. Bacterial/plant glycogen synthase subfamily. In terms of tissue distribution, expressed in the endosperm.

Its subcellular location is the plastid. The protein resides in the chloroplast. It is found in the amyloplast. It catalyses the reaction [(1-&gt;4)-alpha-D-glucosyl](n) + ADP-alpha-D-glucose = [(1-&gt;4)-alpha-D-glucosyl](n+1) + ADP + H(+). The protein operates within glycan biosynthesis; starch biosynthesis. Its function is as follows. Involved in starch synthesis in endosperm amyloplasts. Plays an important role in the elongation of amylopectin B chains. The protein is Soluble starch synthase 3a, chloroplastic/amyloplastic of Oryza sativa subsp. japonica (Rice).